A 722-amino-acid chain; its full sequence is G2-specific protein kinase fin1 (722 aa).

The Protein kinase domain occupies 4-281 (YKILECIGHG…TYQLLRSPIL (278 aa)). Residues 10–18 (IGHGSFGRI) and K33 contribute to the ATP site. D151 (proton acceptor) is an active-site residue. The segment at 528–557 (LSVESDETAVSASSGESVPTDSTLTDTKSK) is disordered. Residues 535–546 (TAVSASSGESVP) are compositionally biased toward polar residues.

The protein belongs to the protein kinase superfamily. Ser/Thr protein kinase family. NIMA subfamily.

Its subcellular location is the cytoplasm. The protein resides in the cytoskeleton. It is found in the microtubule organizing center. It localises to the spindle pole body. The catalysed reaction is L-seryl-[protein] + ATP = O-phospho-L-seryl-[protein] + ADP + H(+). The enzyme catalyses L-threonyl-[protein] + ATP = O-phospho-L-threonyl-[protein] + ADP + H(+). Its function is as follows. Promotes chromosome condensation and nuclear envelope dynamics during mitosis. Activity appears at metaphase-anaphase transition. This Schizosaccharomyces pombe (strain 972 / ATCC 24843) (Fission yeast) protein is G2-specific protein kinase fin1 (fin1).